A 40-amino-acid polypeptide reads, in one-letter code: Photosystem II reaction center protein J (40 aa).

The chain crosses the membrane as a helical span at residues Ile-8–Phe-28.

Belongs to the PsbJ family. As to quaternary structure, PSII is composed of 1 copy each of membrane proteins PsbA, PsbB, PsbC, PsbD, PsbE, PsbF, PsbH, PsbI, PsbJ, PsbK, PsbL, PsbM, PsbT, PsbX, PsbY, PsbZ, Psb30/Ycf12, at least 3 peripheral proteins of the oxygen-evolving complex and a large number of cofactors. It forms dimeric complexes.

The protein resides in the plastid. The protein localises to the chloroplast thylakoid membrane. Functionally, one of the components of the core complex of photosystem II (PSII). PSII is a light-driven water:plastoquinone oxidoreductase that uses light energy to abstract electrons from H(2)O, generating O(2) and a proton gradient subsequently used for ATP formation. It consists of a core antenna complex that captures photons, and an electron transfer chain that converts photonic excitation into a charge separation. The chain is Photosystem II reaction center protein J from Psilotum nudum (Whisk fern).